A 426-amino-acid polypeptide reads, in one-letter code: Enolase (426 aa).

Q163 lines the (2R)-2-phosphoglycerate pocket. The Proton donor role is filled by E205. 3 residues coordinate Mg(2+): D242, E285, and D312. K337, R366, S367, and K388 together coordinate (2R)-2-phosphoglycerate. The Proton acceptor role is filled by K337.

This sequence belongs to the enolase family. Requires Mg(2+) as cofactor.

Its subcellular location is the cytoplasm. It is found in the secreted. The protein localises to the cell surface. The enzyme catalyses (2R)-2-phosphoglycerate = phosphoenolpyruvate + H2O. Its pathway is carbohydrate degradation; glycolysis; pyruvate from D-glyceraldehyde 3-phosphate: step 4/5. Functionally, catalyzes the reversible conversion of 2-phosphoglycerate (2-PG) into phosphoenolpyruvate (PEP). It is essential for the degradation of carbohydrates via glycolysis. The polypeptide is Enolase (Desulfosudis oleivorans (strain DSM 6200 / JCM 39069 / Hxd3) (Desulfococcus oleovorans)).